A 199-amino-acid polypeptide reads, in one-letter code: Holliday junction resolvase RecU (199 aa).

Mg(2+) is bound by residues Thr82, Asp84, Glu97, and Gln116.

This sequence belongs to the RecU family. It depends on Mg(2+) as a cofactor.

It localises to the cytoplasm. It carries out the reaction Endonucleolytic cleavage at a junction such as a reciprocal single-stranded crossover between two homologous DNA duplexes (Holliday junction).. Endonuclease that resolves Holliday junction intermediates in genetic recombination. Cleaves mobile four-strand junctions by introducing symmetrical nicks in paired strands. Promotes annealing of linear ssDNA with homologous dsDNA. Required for DNA repair, homologous recombination and chromosome segregation. This chain is Holliday junction resolvase RecU, found in Streptococcus pyogenes serotype M1.